The sequence spans 567 residues: Proline--tRNA ligase (567 aa).

This sequence belongs to the class-II aminoacyl-tRNA synthetase family. ProS type 1 subfamily. Homodimer.

It is found in the cytoplasm. The catalysed reaction is tRNA(Pro) + L-proline + ATP = L-prolyl-tRNA(Pro) + AMP + diphosphate. In terms of biological role, catalyzes the attachment of proline to tRNA(Pro) in a two-step reaction: proline is first activated by ATP to form Pro-AMP and then transferred to the acceptor end of tRNA(Pro). As ProRS can inadvertently accommodate and process non-cognate amino acids such as alanine and cysteine, to avoid such errors it has two additional distinct editing activities against alanine. One activity is designated as 'pretransfer' editing and involves the tRNA(Pro)-independent hydrolysis of activated Ala-AMP. The other activity is designated 'posttransfer' editing and involves deacylation of mischarged Ala-tRNA(Pro). The misacylated Cys-tRNA(Pro) is not edited by ProRS. This chain is Proline--tRNA ligase, found in Geobacillus kaustophilus (strain HTA426).